The following is a 197-amino-acid chain: Peptide deformylase (197 aa).

Cysteine 106 and histidine 148 together coordinate Fe cation. Glutamate 149 is an active-site residue. Histidine 152 lines the Fe cation pocket.

It belongs to the polypeptide deformylase family. The cofactor is Fe(2+).

The catalysed reaction is N-terminal N-formyl-L-methionyl-[peptide] + H2O = N-terminal L-methionyl-[peptide] + formate. Removes the formyl group from the N-terminal Met of newly synthesized proteins. Requires at least a dipeptide for an efficient rate of reaction. N-terminal L-methionine is a prerequisite for activity but the enzyme has broad specificity at other positions. The chain is Peptide deformylase from Mycobacterium ulcerans (strain Agy99).